A 495-amino-acid chain; its full sequence is D-hydantoinase/dihydropyrimidinase (495 aa).

Zn(2+) contacts are provided by H59, H61, and K150. K150 carries the post-translational modification N6-carboxylysine. Substrate is bound at residue Y155. Residues H183 and H239 each coordinate Zn(2+). A substrate-binding site is contributed by S289. D316 lines the Zn(2+) pocket. N337 lines the substrate pocket.

The protein belongs to the metallo-dependent hydrolases superfamily. Hydantoinase/dihydropyrimidinase family. In terms of assembly, homotetramer. Zn(2+) is required as a cofactor. Post-translationally, carboxylation allows a single lysine to coordinate two zinc ions.

It catalyses the reaction 5,6-dihydrouracil + H2O = 3-(carbamoylamino)propanoate + H(+). Functionally, catalyzes the hydrolysis of dihydropyrimidines and of the structurally related DL-5-mono-substituted hydantoins, to produce N-carbamoyl-D-amino acids. This Pseudomonas putida (Arthrobacter siderocapsulatus) protein is D-hydantoinase/dihydropyrimidinase.